Reading from the N-terminus, the 750-residue chain is Rho GTPase-activating protein 9 (750 aa).

Residues 22 to 88 form the SH3 domain; it reads PRGSQLCALY…PAAYMIEESI (67 aa). Disordered regions lie at residues 120 to 187 and 242 to 319; these read ALPS…LMSE and WKPP…LLDD. A compositionally biased stretch (polar residues) spans 163-180; the sequence is RSLSQEDLPSEASASTAG. Residues 213–247 enclose the WW domain; sequence LQRLDAWEQHLDPNSGRCFYINSLTGCKSWKPPRR. 2 stretches are compositionally biased toward polar residues: residues 251–270 and 291–300; these read ETNP…NDVL and GSLSLSQRTS. The span at 301 to 317 shows a compositional bias: low complexity; the sequence is QLDPPALQAPRPLPQLL. In terms of domain architecture, PH spans 322 to 435; that stretch reads EVEKSGLLNM…WHRALRTVIE (114 aa). 3 lipid binding regions span residues 342 to 345, 397 to 399, and 432 to 669; these read RKNW, SSR, and TVIE…CLSQ. A compositionally biased stretch (basic and acidic residues) spans 446–462; it reads EAPTGRDQGSGDRENPL. A disordered region spans residues 446–488; that stretch reads EAPTGRDQGSGDRENPLELRLSGSGPAELSAGEDEEEESELVS. At S475 the chain carries Phosphoserine. Over residues 476-485 the composition is skewed to acidic residues; that stretch reads AGEDEEEESE. A Phosphoserine modification is found at S500. Positions 542–749 constitute a Rho-GAP domain; it reads CQLESLCQRE…LMLTNFTSLF (208 aa).

Interacts with FASLG. Predominantly expressed in peripheral blood leukocytes, spleen, and thymus.

Functionally, GTPase activator for the Rho-type GTPases by converting them to an inactive GDP-bound state. Has a substantial GAP activity toward CDC42 and RAC1 and less toward RHOA. Has a role in regulating adhesion of hematopoietic cells to the extracellular matrix. Binds phosphoinositides, and has the highest affinity for phosphatidylinositol 3,4,5-trisphosphate, followed by phosphatidylinositol 3,4-bisphosphate and phosphatidylinositol 4,5-bisphosphate. The polypeptide is Rho GTPase-activating protein 9 (ARHGAP9) (Homo sapiens (Human)).